Consider the following 339-residue polypeptide: Thermospermine synthase ACAULIS5 (339 aa).

Residues 33-270 (CHWYEETIDD…DTWGWVMASD (238 aa)) form the PABS domain. S-adenosyl 3-(methylsulfanyl)propylamine-binding positions include glutamine 62, glutamate 117, aspartate 137, and 168-169 (DA). Aspartate 186 serves as the catalytic Proton acceptor.

Belongs to the spermidine/spermine synthase family. As to expression, highly expressed in stem internodes and roots. Lower levels in young seedlings before flowering and rosette leaves. Expressed in the vascular tissues. Restricted to procambial and/or provascular cells during primary root development and early leaves development.

It catalyses the reaction S-adenosyl 3-(methylsulfanyl)propylamine + spermidine = thermospermine + S-methyl-5'-thioadenosine + H(+). Its function is as follows. Required for correct xylem specification through regulation of the lifetime of the xylem elements. Prevents premature death of the xylem vessel elements. The chain is Thermospermine synthase ACAULIS5 (ACL5) from Arabidopsis thaliana (Mouse-ear cress).